The sequence spans 255 residues: Imidazole glycerol phosphate synthase subunit HisF (255 aa).

Catalysis depends on residues D12 and D131.

It belongs to the HisA/HisF family. As to quaternary structure, heterodimer of HisH and HisF.

The protein localises to the cytoplasm. The enzyme catalyses 5-[(5-phospho-1-deoxy-D-ribulos-1-ylimino)methylamino]-1-(5-phospho-beta-D-ribosyl)imidazole-4-carboxamide + L-glutamine = D-erythro-1-(imidazol-4-yl)glycerol 3-phosphate + 5-amino-1-(5-phospho-beta-D-ribosyl)imidazole-4-carboxamide + L-glutamate + H(+). The protein operates within amino-acid biosynthesis; L-histidine biosynthesis; L-histidine from 5-phospho-alpha-D-ribose 1-diphosphate: step 5/9. In terms of biological role, IGPS catalyzes the conversion of PRFAR and glutamine to IGP, AICAR and glutamate. The HisF subunit catalyzes the cyclization activity that produces IGP and AICAR from PRFAR using the ammonia provided by the HisH subunit. The polypeptide is Imidazole glycerol phosphate synthase subunit HisF (Salinispora arenicola (strain CNS-205)).